The chain runs to 673 residues: Beta-galactosidase 8 (673 aa).

An N-terminal signal peptide occupies residues M1–A20. An N-linked (GlcNAc...) asparagine glycan is attached at N38. Residue E189 is the Proton donor of the active site. Residue N230 is glycosylated (N-linked (GlcNAc...) asparagine). The active-site Nucleophile is E272. Residues N304, N329, N401, N489, and N540 are each glycosylated (N-linked (GlcNAc...) asparagine).

It belongs to the glycosyl hydrolase 35 family.

The protein localises to the secreted. Its subcellular location is the extracellular space. The protein resides in the apoplast. It catalyses the reaction Hydrolysis of terminal non-reducing beta-D-galactose residues in beta-D-galactosides.. The sequence is that of Beta-galactosidase 8 from Oryza sativa subsp. japonica (Rice).